The chain runs to 888 residues: Extra-large guanine nucleotide-binding protein 1 (888 aa).

Residues 98-119 (SVIEHTEEEEEEEGGDGEDCEL) form a disordered region. The span at 103–118 (TEEEEEEEGGDGEDCE) shows a compositional bias: acidic residues. The Nuclear localization signal signature appears at 205 to 222 (RRVRVVPVKKQPQTKGKK). Residues 225 to 268 (CYRCFKGSRFTEKEVCLVCDAKYCNSCVLRAMGSMPEGRKCVTC) form an RING-type; degenerate zinc finger. The region spanning 482–879 (TLQKILLVGN…NICMSEYSMY (398 aa)) is the G-alpha domain. Positions 485–498 (KILLVGNSGSGTST) are G1 motif. GTP is bound by residues 490 to 498 (GNSGSGTST) and 661 to 669 (DILYAEGVT). Residues S497 and T669 each contribute to the Ca(2+) site. Positions 661–669 (DILYAEGVT) are G2 motif. A G3 motif region spans residues 702–711 (YQLIRVPSRG). Residues 770–777 (LLILNKYD) form a G4 motif region. A GTP-binding site is contributed by 774 to 777 (NKYD). The segment at 843 to 848 (SKSLDP) is G5 motif.

It belongs to the G-alpha family. XLG subfamily. Requires Ca(2+) as cofactor. Ubiquitous. Strongly expressed in vascular tissues, root and shoot meristems and lateral root primordia.

The protein resides in the nucleus. Guanine nucleotide-binding proteins (G proteins) are involved as modulators or transducers in various transmembrane signaling systems. Binds GTP with specificity. Plays a role in the root morphogenesis by regulation of the cell proliferation. This chain is Extra-large guanine nucleotide-binding protein 1 (XLG1), found in Arabidopsis thaliana (Mouse-ear cress).